The following is a 446-amino-acid chain: RUN domain-containing protein 3A (446 aa).

An interaction with RAP2A region spans residues 1-298 (MEASFVQTTM…LQLQLEEAAA (298 aa)). The RUN domain maps to 52–189 (DDSSEEFVNF…IDFSFCLKGE (138 aa)). The residue at position 215 (Thr215) is a Phosphothreonine. A disordered region spans residues 216-239 (DEEERHSAESSTSEDNSPEHPYLP). The residue at position 232 (Ser232) is a Phosphoserine. Positions 267 to 322 (YLEELVRLRESQLKDLEAENRRLQLQLEEAAAQNQREKRELEGVILELQEQLTGLI) form a coiled coil. The span at 372–384 (PLSAEASLSSDSQ) shows a compositional bias: polar residues. Residues 372 to 403 (PLSAEASLSSDSQRLGEAKRDEEPWGPIGKDP) are disordered. A compositionally biased stretch (basic and acidic residues) spans 385–394 (RLGEAKRDEE). 2 positions are modified to phosphoserine: Ser416 and Ser419.

Belongs to the RUNDC3 family. Interacts with the GTP-bound form of RAP2A. Brain.

Its function is as follows. May act as an effector of RAP2A in neuronal cells. In Mus musculus (Mouse), this protein is RUN domain-containing protein 3A (Rundc3a).